The primary structure comprises 116 residues: Large ribosomal subunit protein bL19 (116 aa).

The protein belongs to the bacterial ribosomal protein bL19 family.

Functionally, this protein is located at the 30S-50S ribosomal subunit interface and may play a role in the structure and function of the aminoacyl-tRNA binding site. The polypeptide is Large ribosomal subunit protein bL19 (Clostridioides difficile (strain 630) (Peptoclostridium difficile)).